The primary structure comprises 852 residues: Gamma-tubulin complex component 2 homolog (852 aa).

Serine 73 is modified (phosphoserine).

Belongs to the TUBGCP family. As to quaternary structure, gamma-tubulin small complex (Gamma TuSC) is a heterotetrameric complex which contains two molecules of gamma-tubulin, and one molecule each of Dgrip84 and Dgrip91. The gamma-tubulin in this complex binds preferentially to GDP over GTP.

The protein localises to the cytoplasm. It is found in the cytoskeleton. Its subcellular location is the microtubule organizing center. It localises to the centrosome. The protein resides in the perinuclear region. This Drosophila melanogaster (Fruit fly) protein is Gamma-tubulin complex component 2 homolog (Grip84).